The following is a 168-amino-acid chain: Shikimate kinase (168 aa).

10-15 provides a ligand contact to ATP; the sequence is GVGKTT. Residue T14 participates in Mg(2+) binding. The substrate site is built by D32, R56, and G77. R115 provides a ligand contact to ATP. R133 is a substrate binding site.

Belongs to the shikimate kinase family. In terms of assembly, monomer. It depends on Mg(2+) as a cofactor.

Its subcellular location is the cytoplasm. The enzyme catalyses shikimate + ATP = 3-phosphoshikimate + ADP + H(+). Its pathway is metabolic intermediate biosynthesis; chorismate biosynthesis; chorismate from D-erythrose 4-phosphate and phosphoenolpyruvate: step 5/7. In terms of biological role, catalyzes the specific phosphorylation of the 3-hydroxyl group of shikimic acid using ATP as a cosubstrate. In Macrococcus caseolyticus (strain JCSC5402) (Macrococcoides caseolyticum), this protein is Shikimate kinase.